The chain runs to 439 residues: GTPase Der (439 aa).

2 EngA-type G domains span residues 2–168 (ATVL…EEKG) and 181–357 (IKIA…SSYT). Residues 8–15 (GKPNVGKS), 55–59 (DTCGV), 118–121 (NKTE), 187–194 (GRPNVGKS), 234–238 (DTAGL), and 300–303 (NKWD) contribute to the GTP site. The KH-like domain maps to 358–439 (TKVPSSALNS…PIFLKFKKSR (82 aa)).

The protein belongs to the TRAFAC class TrmE-Era-EngA-EngB-Septin-like GTPase superfamily. EngA (Der) GTPase family. Associates with the 50S ribosomal subunit.

Functionally, GTPase that plays an essential role in the late steps of ribosome biogenesis. This Thermotoga neapolitana (strain ATCC 49049 / DSM 4359 / NBRC 107923 / NS-E) protein is GTPase Der.